The following is a 169-amino-acid chain: Putative hydrogenase maturation protease MJ0631 (169 aa).

This sequence belongs to the peptidase A31 family.

In Methanocaldococcus jannaschii (strain ATCC 43067 / DSM 2661 / JAL-1 / JCM 10045 / NBRC 100440) (Methanococcus jannaschii), this protein is Putative hydrogenase maturation protease MJ0631.